Consider the following 194-residue polypeptide: MGVTPVSNQPLVAQQPKGIIDPSTGKPIGSNDAFFGEINNELADKGFLVTSTDELINWARTGSLMWMTFGLACCAVEMMQLSMPRYDVERFGFAPRASPRQSDVMIVAGTLTNKMAPALRKVYDQMPEPRYVISMGSCANGGGYYHYSYSVVRGCDRVVPIDIYVPGCPPTAEALLYGVLLLQKKIRRTGTIER.

Polar residues predominate over residues 1–12 (MGVTPVSNQPLV). Positions 1 to 23 (MGVTPVSNQPLVAQQPKGIIDPS) are disordered. Residues cysteine 73, cysteine 74, cysteine 138, and cysteine 168 each contribute to the [4Fe-4S] cluster site.

This sequence belongs to the complex I 20 kDa subunit family. NDH-1 is composed of 14 different subunits. Subunits NuoB, C, D, E, F, and G constitute the peripheral sector of the complex. [4Fe-4S] cluster serves as cofactor.

The protein localises to the cell inner membrane. The catalysed reaction is a quinone + NADH + 5 H(+)(in) = a quinol + NAD(+) + 4 H(+)(out). Its function is as follows. NDH-1 shuttles electrons from NADH, via FMN and iron-sulfur (Fe-S) centers, to quinones in the respiratory chain. The immediate electron acceptor for the enzyme in this species is believed to be ubiquinone. Couples the redox reaction to proton translocation (for every two electrons transferred, four hydrogen ions are translocated across the cytoplasmic membrane), and thus conserves the redox energy in a proton gradient. This Rhizobium etli (strain ATCC 51251 / DSM 11541 / JCM 21823 / NBRC 15573 / CFN 42) protein is NADH-quinone oxidoreductase subunit B 1.